A 270-amino-acid chain; its full sequence is 2-epi-5-epi-valiolone 7-phosphate 2-epimerase (270 aa).

Active-site proton donor/acceptor residues include glutamate 143 and glutamate 236.

This sequence belongs to the hyi family.

It catalyses the reaction 2-epi-5-epi-valiolone 7-phosphate = 5-epi-valiolone 7-phosphate. In terms of biological role, involved in the biosynthesis of the alpha-glucosidase inhibitor acarbose. Catalyzes the 2-epimerisation of 2-epi-5-epivaliolone 7-phosphate to yield 5-epi-valiolone 7-phosphate. The sequence is that of 2-epi-5-epi-valiolone 7-phosphate 2-epimerase (acbO) from Actinoplanes sp. (strain ATCC 31044 / CBS 674.73 / SE50/110).